The sequence spans 459 residues: Glycosyl hydrolase family 109 protein (459 aa).

The segment at residues 1–31 is a signal peptide (tat-type signal); sequence MHNIHRRNFLKAAGAATAGLVTANIALNAYA. Residues 64 to 65, aspartate 86, 135 to 138, 155 to 156, and asparagine 184 each bind NAD(+); these read ER, WEWH, and EV. Residues tyrosine 213, arginine 232, 244-247, and tyrosine 326 contribute to the substrate site; that span reads YPTH. An NAD(+)-binding site is contributed by tyrosine 244.

The protein belongs to the Gfo/Idh/MocA family. Glycosyl hydrolase 109 subfamily. NAD(+) serves as cofactor. Post-translationally, predicted to be exported by the Tat system. The position of the signal peptide cleavage has not been experimentally proven.

Glycosidase. The sequence is that of Glycosyl hydrolase family 109 protein from Shewanella baltica (strain OS155 / ATCC BAA-1091).